The following is a 327-amino-acid chain: Phenylalanine--tRNA ligase alpha subunit (327 aa).

E252 lines the Mg(2+) pocket.

The protein belongs to the class-II aminoacyl-tRNA synthetase family. Phe-tRNA synthetase alpha subunit type 1 subfamily. In terms of assembly, tetramer of two alpha and two beta subunits. Mg(2+) is required as a cofactor.

The protein resides in the cytoplasm. The catalysed reaction is tRNA(Phe) + L-phenylalanine + ATP = L-phenylalanyl-tRNA(Phe) + AMP + diphosphate + H(+). The chain is Phenylalanine--tRNA ligase alpha subunit from Shigella boydii serotype 18 (strain CDC 3083-94 / BS512).